The primary structure comprises 262 residues: Indole-3-glycerol phosphate synthase (262 aa).

The protein belongs to the TrpC family.

The enzyme catalyses 1-(2-carboxyphenylamino)-1-deoxy-D-ribulose 5-phosphate + H(+) = (1S,2R)-1-C-(indol-3-yl)glycerol 3-phosphate + CO2 + H2O. It participates in amino-acid biosynthesis; L-tryptophan biosynthesis; L-tryptophan from chorismate: step 4/5. The chain is Indole-3-glycerol phosphate synthase from Bordetella bronchiseptica (strain ATCC BAA-588 / NCTC 13252 / RB50) (Alcaligenes bronchisepticus).